Consider the following 282-residue polypeptide: Energy-coupling factor transporter ATP-binding protein EcfA1 (282 aa).

The 238-residue stretch at 6 to 243 folds into the ABC transporter domain; the sequence is VTVKHLSFTY…EVLIKSAGLE (238 aa). Position 40–47 (40–47) interacts with ATP; it reads GHNGSGKS.

The protein belongs to the ABC transporter superfamily. Energy-coupling factor EcfA family. Forms a stable energy-coupling factor (ECF) transporter complex composed of 2 membrane-embedded substrate-binding proteins (S component), 2 ATP-binding proteins (A component) and 2 transmembrane proteins (T component).

Its subcellular location is the cell membrane. Functionally, ATP-binding (A) component of a common energy-coupling factor (ECF) ABC-transporter complex. Unlike classic ABC transporters this ECF transporter provides the energy necessary to transport a number of different substrates. This Lactobacillus johnsonii (strain CNCM I-12250 / La1 / NCC 533) protein is Energy-coupling factor transporter ATP-binding protein EcfA1.